The sequence spans 244 residues: Chaperone protein FimB/FhaD (244 aa).

The N-terminal stretch at 1–24 (MARWRRRLGVAALGAAMLASLAPA) is a signal peptide.

This sequence belongs to the periplasmic pilus chaperone family.

The protein resides in the periplasm. Functionally, required for the biogenesis of the filamentous hemagglutinin and the fimbria. The sequence is that of Chaperone protein FimB/FhaD (fimB) from Bordetella pertussis (strain Tohama I / ATCC BAA-589 / NCTC 13251).